Consider the following 445-residue polypeptide: Probable fructoselysine/psicoselysine transporter FrlA (445 aa).

Transmembrane regions (helical) follow at residues Leu10–Val30, Ala38–Pro58, Gly93–Val113, Pro121–Leu141, Leu155–Phe175, Ala181–Ile201, Cys236–Phe256, Ile273–Leu293, Ile334–Leu354, Gly355–Cys375, Ala389–Val410, and Leu417–Ala435.

Belongs to the amino acid-polyamine-organocation (APC) superfamily.

It is found in the cell inner membrane. The enzyme catalyses N(6)-(D-fructosyl)-L-lysine(in) = N(6)-(D-fructosyl)-L-lysine(out). The catalysed reaction is N(6)-(D-psicosyl)-L-lysine(in) = N(6)-(D-psicosyl)-L-lysine(out). The protein operates within carbohydrate metabolism; fructoselysine degradation. Functionally, is likely involved in the transport of fructoselysine and psicoselysine to the cytoplasm, where they are degraded. This chain is Probable fructoselysine/psicoselysine transporter FrlA, found in Escherichia coli (strain K12).